Consider the following 166-residue polypeptide: CDP-archaeol synthase (166 aa).

A run of 4 helical transmembrane segments spans residues 39–59 (IRGF…QMYA), 61–81 (ISGL…LLAI), 104–124 (EWFL…TLLF), and 127–147 (IWML…LTPL).

It belongs to the CDP-archaeol synthase family. Mg(2+) serves as cofactor.

Its subcellular location is the cell membrane. It carries out the reaction 2,3-bis-O-(geranylgeranyl)-sn-glycerol 1-phosphate + CTP + H(+) = CDP-2,3-bis-O-(geranylgeranyl)-sn-glycerol + diphosphate. Its pathway is membrane lipid metabolism; glycerophospholipid metabolism. Functionally, catalyzes the formation of CDP-2,3-bis-(O-geranylgeranyl)-sn-glycerol (CDP-archaeol) from 2,3-bis-(O-geranylgeranyl)-sn-glycerol 1-phosphate (DGGGP) and CTP. This reaction is the third ether-bond-formation step in the biosynthesis of archaeal membrane lipids. The sequence is that of CDP-archaeol synthase from Methanospirillum hungatei JF-1 (strain ATCC 27890 / DSM 864 / NBRC 100397 / JF-1).